A 35-amino-acid polypeptide reads, in one-letter code: Ranatuerin-2SPa (35 aa).

A disulfide bridge connects residues Cys-28 and Cys-33.

In terms of tissue distribution, expressed by the skin glands.

It is found in the secreted. In terms of biological role, antibacterial activity against Gram-positive bacterium S.aureus. Shows no detectable hemolytic activity towards human erythrocytes. The chain is Ranatuerin-2SPa from Lithobates septentrionalis (Mink frog).